The chain runs to 37 residues: Cytochrome b6-f complex subunit 5 (37 aa).

Residues 5-25 (LLCGIVLGLIPITLMGLFVAA) form a helical membrane-spanning segment.

It belongs to the PetG family. As to quaternary structure, the 4 large subunits of the cytochrome b6-f complex are cytochrome b6, subunit IV (17 kDa polypeptide, PetD), cytochrome f and the Rieske protein, while the 4 small subunits are PetG, PetL, PetM and PetN. The complex functions as a dimer.

It localises to the cellular thylakoid membrane. Component of the cytochrome b6-f complex, which mediates electron transfer between photosystem II (PSII) and photosystem I (PSI), cyclic electron flow around PSI, and state transitions. PetG is required for either the stability or assembly of the cytochrome b6-f complex. This chain is Cytochrome b6-f complex subunit 5, found in Synechococcus sp. (strain CC9311).